Consider the following 532-residue polypeptide: Protein DETOXIFICATION 51 (532 aa).

12 consecutive transmembrane segments (helical) span residues 65–85 (FPIAVTALVLYLRSAVSMFFL), 98–118 (LAIAFANITGYSVLSGLALGM), 142–162 (VVFLLVCCVPISVLWFNVGKI), 176–196 (AQTYLIFSLPDLLTNTLLHPI), 208–228 (PVTLASLSGAVFHLPANLFLV), 238–258 (VAVASSITNIFVVAFLVCYVW), 290–310 (VSVCLEWWWYEIMIVLCGLLV), 316–336 (VAAMGVLIQTTSFLYVFPSSL), 358–378 (LTATVAIVFAAVTGIIAAAFA), 395–415 (ILQLTAAALPILGLCEIGNCP), 439–459 (AFYLVGMPVAVGLGFWAGIGF), and 461–481 (GLWVGLLAAQISCAGLMMYVV).

This sequence belongs to the multi antimicrobial extrusion (MATE) (TC 2.A.66.1) family. As to expression, expressed in the meristematic regions. Mainly detected in tissues where cells were actively dividing, such as leaf primordia and young leaves, the junction between lateral root and the primary root, root cap, hydathodes, the junction between secondary inflorescence and the main inflorescence, young stamen and young siliques. Highly expressed at the junction between the hypocotyl and the root, and at the marginal areas of cotyledons and true leaves, coinciding with the locations of the hydathode. Also highly expressed at the basal regions of the newly emerged lateral roots. In the floral organs, mostly expressed at the style of the pistil.

It is found in the endosome membrane. It localises to the late endosome membrane. Functionally, functions as a multidrug and toxin extrusion transporter that negatively regulates plant disease resistance. Plays an important role in maintaining normal plant architecture, possibly by regulating local auxin biosynthesis. May act as a negative regulator of hypocotyl cell elongation in the light. The chain is Protein DETOXIFICATION 51 from Arabidopsis thaliana (Mouse-ear cress).